An 855-amino-acid chain; its full sequence is Vomeronasal type-2 receptor 26 (855 aa).

The first 22 residues, 1–22 (MKLLTAFSPLVVLILFQEQISC), serve as a signal peptide directing secretion. Residues 23–595 (YYLTKYASSG…FLAHEDPLGT (573 aa)) lie on the Extracellular side of the membrane. Residues Asn-101 and Asn-295 are each glycosylated (N-linked (GlcNAc...) asparagine). The helical transmembrane segment at 596 to 616 (VLVSLAISLSAFSAMILGLFI) threads the bilayer. Residues 617-630 (CYRETPIVRANNRN) are Cytoplasmic-facing. The chain crosses the membrane as a helical span at residues 631 to 651 (LSYLLLISLKLCFSCSLMFIG). Topologically, residues 652 to 662 (QPRTVTCVLRQ) are extracellular. The helical transmembrane segment at 663–683 (IIFGIVFSIVISAILAKTFIV) threads the bilayer. The Cytoplasmic segment spans residues 684-706 (VMAFKAIKPGSILKMGMVTRLSN). The helical transmembrane segment at 707-727 (AIVCCGSIIQVCICAVWLGTY) threads the bilayer. The Extracellular segment spans residues 728 to 753 (PPFPDVDMHSEFGQIILWCNEGSTLA). Residues 754 to 774 (FYCVLGYLGFLASLSLLIAFL) traverse the membrane as a helical segment. Topologically, residues 775–786 (ARRLPDSFNEAK) are cytoplasmic. The chain crosses the membrane as a helical span at residues 787-807 (TITFSMLVFCSVWISFVPAYL). Residues 808 to 814 (SSKGKTM) lie on the Extracellular side of the membrane. Residues 815–835 (VAVEILSILASSAGLLGCIFL) traverse the membrane as a helical segment. The Cytoplasmic portion of the chain corresponds to 836–855 (PKCYVILLKSGGHSRKKFFK).

The protein belongs to the G-protein coupled receptor 3 family. As to expression, expressed in the basal epithelium of the vomeronasal organ. Located to vomeronasal sensory neurons that project their axons to six to ten glomeruli that reside in globally conserved areas within the caudal accessory olfactory bulb (AOB).

Its subcellular location is the cell membrane. Functionally, putative pheromone receptor. The protein is Vomeronasal type-2 receptor 26 (Vmn2r26) of Mus musculus (Mouse).